The sequence spans 387 residues: Monopolar spindle protein 2 (387 aa).

Positions 117–232 (MNLNSPSKFL…NSSRTSDPGS (116 aa)) form a coiled coil. Residues 216–235 (RQVEDNQNSSRTSDPGSPLV) are disordered. Polar residues predominate over residues 220-230 (DNQNSSRTSDP). A helical transmembrane segment spans residues 311–327 (IRIIVCFALLAGVLPYI).

It belongs to the MPS2 family. As to quaternary structure, interacts with BBP1, MPS3, and SPC24.

The protein localises to the nucleus membrane. Its subcellular location is the cytoplasm. It is found in the cytoskeleton. It localises to the microtubule organizing center. The protein resides in the spindle pole body. Its function is as follows. Component of the spindle pole body (SPB) required for insertion of the nascent SPB into the nuclear envelope and for the proper execution of spindle pole body (SPB) duplication. The chain is Monopolar spindle protein 2 (MPS2) from Saccharomyces cerevisiae (strain ATCC 204508 / S288c) (Baker's yeast).